The following is a 436-amino-acid chain: Enolase (436 aa).

Glutamine 163 provides a ligand contact to (2R)-2-phosphoglycerate. The Proton donor role is filled by glutamate 205. Residues aspartate 242, glutamate 285, and aspartate 312 each contribute to the Mg(2+) site. Lysine 337, arginine 366, serine 367, and lysine 388 together coordinate (2R)-2-phosphoglycerate. Lysine 337 acts as the Proton acceptor in catalysis.

Belongs to the enolase family. It depends on Mg(2+) as a cofactor.

The protein resides in the cytoplasm. The protein localises to the secreted. It localises to the cell surface. The enzyme catalyses (2R)-2-phosphoglycerate = phosphoenolpyruvate + H2O. It participates in carbohydrate degradation; glycolysis; pyruvate from D-glyceraldehyde 3-phosphate: step 4/5. In terms of biological role, catalyzes the reversible conversion of 2-phosphoglycerate (2-PG) into phosphoenolpyruvate (PEP). It is essential for the degradation of carbohydrates via glycolysis. The chain is Enolase from Solidesulfovibrio magneticus (strain ATCC 700980 / DSM 13731 / RS-1) (Desulfovibrio magneticus).